The following is a 664-amino-acid chain: Probable LRR receptor-like serine/threonine-protein kinase At1g63430 (664 aa).

Residues 1-22 form the signal peptide; the sequence is MRSKYFCSLALVLGLFFVSCDG. The Extracellular portion of the chain corresponds to 23 to 288; the sequence is FASNEVQALR…KHHRASKPKW (266 aa). A glycan (N-linked (GlcNAc...) asparagine) is linked at N75. 4 LRR repeats span residues 94-116, 118-140, 142-165, and 166-178; these read YLQE…IGNL, NLKI…IGSL, GIMI…GNLK, and YLRE…NRLQ. N-linked (GlcNAc...) asparagine glycosylation is present at N197. The helical transmembrane segment at 289-309 threads the bilayer; that stretch reads LLALEIVTGSMVGLLLLVALF. Residues 310-664 are Cytoplasmic-facing; sequence SAVHRWNNRS…LAWAELALDS (355 aa). Positions 360-642 constitute a Protein kinase domain; it reads EDFSNIIGLS…ELCETLESRI (283 aa).

Belongs to the protein kinase superfamily. Ser/Thr protein kinase family.

It is found in the cell membrane. It catalyses the reaction L-seryl-[protein] + ATP = O-phospho-L-seryl-[protein] + ADP + H(+). The enzyme catalyses L-threonyl-[protein] + ATP = O-phospho-L-threonyl-[protein] + ADP + H(+). The polypeptide is Probable LRR receptor-like serine/threonine-protein kinase At1g63430 (Arabidopsis thaliana (Mouse-ear cress)).